The primary structure comprises 295 residues: Excinuclease cho (295 aa).

Residues threonine 33–lysine 108 enclose the GIY-YIG domain.

Functionally, incises the DNA at the 3' side of a lesion during nucleotide excision repair. Incises the DNA farther away from the lesion than UvrC. Not able to incise the 5' site of a lesion. When a lesion remains because UvrC is not able to induce the 3' incision, Cho incises the DNA. Then UvrC makes the 5' incision. The combined action of Cho and UvrC broadens the substrate range of nucleotide excision repair. In Escherichia coli O157:H7, this protein is Excinuclease cho (cho).